A 351-amino-acid polypeptide reads, in one-letter code: N-acetyl-gamma-glutamyl-phosphate reductase (351 aa).

Cysteine 154 is a catalytic residue.

The protein belongs to the NAGSA dehydrogenase family. Type 1 subfamily.

Its subcellular location is the cytoplasm. The enzyme catalyses N-acetyl-L-glutamate 5-semialdehyde + phosphate + NADP(+) = N-acetyl-L-glutamyl 5-phosphate + NADPH + H(+). Its pathway is amino-acid biosynthesis; L-arginine biosynthesis; N(2)-acetyl-L-ornithine from L-glutamate: step 3/4. Functionally, catalyzes the NADPH-dependent reduction of N-acetyl-5-glutamyl phosphate to yield N-acetyl-L-glutamate 5-semialdehyde. This is N-acetyl-gamma-glutamyl-phosphate reductase from Synechocystis sp. (strain ATCC 27184 / PCC 6803 / Kazusa).